The following is a 338-amino-acid chain: Lipoate-protein ligase A (338 aa).

Positions 29–216 (PATQRVLFLW…AFFAHYGERV (188 aa)) constitute a BPL/LPL catalytic domain. ATP contacts are provided by residues Arg71, 76–79 (GAVF), and Lys134. Lys134 is a binding site for (R)-lipoate.

The protein belongs to the LplA family. As to quaternary structure, monomer.

The protein localises to the cytoplasm. It carries out the reaction L-lysyl-[lipoyl-carrier protein] + (R)-lipoate + ATP = N(6)-[(R)-lipoyl]-L-lysyl-[lipoyl-carrier protein] + AMP + diphosphate + H(+). Its pathway is protein modification; protein lipoylation via exogenous pathway; protein N(6)-(lipoyl)lysine from lipoate: step 1/2. It functions in the pathway protein modification; protein lipoylation via exogenous pathway; protein N(6)-(lipoyl)lysine from lipoate: step 2/2. Functionally, catalyzes both the ATP-dependent activation of exogenously supplied lipoate to lipoyl-AMP and the transfer of the activated lipoyl onto the lipoyl domains of lipoate-dependent enzymes. The polypeptide is Lipoate-protein ligase A (Escherichia coli O6:H1 (strain CFT073 / ATCC 700928 / UPEC)).